The primary structure comprises 499 residues: Endosomal/lysosomal proton channel TMEM175 (499 aa).

Residues 1-10 show a composition bias toward polar residues; sequence MSRLQVQEQA. The interval 1–26 is disordered; it reads MSRLQVQEQAVDSEGDSSLYRRDEEG. Over 1 to 30 the chain is Cytoplasmic; the sequence is MSRLQVQEQAVDSEGDSSLYRRDEEGTQSS. A helical transmembrane segment spans residues 31–53; sequence HRMLGFSDALLSIIATVMILPVT. The RxxxFSD motif 1 motif lies at 32–38; that stretch reads RMLGFSD. Residues 54 to 74 lie on the Lumenal side of the membrane; it reads HTEISPEQQFDKSIQKLLATR. Positions 55-60 are short helix H1-1; that stretch reads TEISPE. The short helix H2-1 stretch occupies residues 62–68; sequence QFDKSIQ. A helical membrane pass occupies residues 75–97; the sequence is IAVYLMTFLIVTVAWAAHTRLFQ. The Cytoplasmic segment spans residues 98–103; that stretch reads VVGKID. Residues 104-125 traverse the membrane as a helical segment; that stretch reads DTLALLNLACMMTITLLPYTFS. Topologically, residues 126 to 135 are lumenal; it reads LMVTFPDVPL. Residues 136-157 form a helical membrane-spanning segment; that stretch reads GIFLFCMCVIAIGSVQAMIVGY. At 158 to 181 the chain is on the cytoplasmic side; sequence AFHFPHLLNPQIQCSTHRALSRRH. A helical transmembrane segment spans residues 182–202; that stretch reads ILHLVLRGPALCFVAAVFSLF. Topologically, residues 203-207 are lumenal; it reads FFPLS. The chain crosses the membrane as a helical span at residues 208–227; it reads YLLMVTVIFLPHISKATTWC. Residues 228–254 are Cytoplasmic-facing; it reads KDKFMGHRESPAHNVEPFSIDLHAPLS. A helical membrane pass occupies residues 255-279; sequence KERVEAFSDGVYAIVATLLILDICE. The RxxxFSD motif 2 signature appears at 257–263; the sequence is RVEAFSD. Over 280–306 the chain is Lumenal; that stretch reads DNVPDPKDVQQKFSGSLVAALGAYGPQ. The interval 285-293 is short helix H1-2; the sequence is PKDVQQKFS. A short helix H2-2 region spans residues 295–301; it reads SLVAALG. The chain crosses the membrane as a helical span at residues 307–329; that stretch reads FLAYFGSFATVGLLWFAHHSLFL. Residues 330–335 are Cytoplasmic-facing; the sequence is HVRKAT. A helical membrane pass occupies residues 336–357; sequence QTMGLFNILSLAFVGGLPLAYQ. Topologically, residues 358 to 372 are lumenal; the sequence is QTSAFARQPRDELER. A helical transmembrane segment spans residues 373-393; sequence VRVSCAIIFFASIFQFAIWTT. Over 394–413 the chain is Cytoplasmic; sequence ALLHQRETLQPAVQFGGQEH. The helical transmembrane segment at 414–437 threads the bilayer; it reads AFMFAKLALYPCASLLAFAATCLL. Topologically, residues 438–439 are lumenal; it reads SR. Residues 440–466 traverse the membrane as a helical segment; that stretch reads FSTAIFHLMQIAVPFAFLLLRLLVRLA. The Cytoplasmic segment spans residues 467–499; that stretch reads LAGLQVLWDLWPERPQQDQGEPETQSQLLPASC.

It belongs to the TMEM175 family. As to quaternary structure, homodimer. Interacts with AKT (AKT1, AKT2 or AKT3); leading to formation of the lysoK(GF) complex, which activates the channel. Interacts with LAMP1; inhibiting the proton channel activity of TMEM175. Interacts with LAMP2; inhibiting the proton channel activity of TMEM175.

It is found in the endosome membrane. Its subcellular location is the lysosome membrane. It carries out the reaction H(+)(in) = H(+)(out). The enzyme catalyses K(+)(in) = K(+)(out). With respect to regulation, active at low pH (under pH 4.6): proton channel activity is activated by luminal side protons. Polyunsaturated fatty acids, such as arachidonic acid, also activate the channel activity. Proton channel activity is directly inhibited by LAMP1 or LAMP2, facilitating lysosomal acidification. Channel activity is activated following interaction with AKT (AKT1, AKT2 or AKT3): interaction promotes activation from closed to an open state. Activation by AKT is independent of AKT serine/threonine-protein kinase activity. Its function is as follows. Proton-activated proton channel that catalyzes proton efflux from endosomes and lysosomes to maintain a steady-state pH. Activated at low pH (under pH 4.6) by luminal side protons: selectively mediates lysosomal proton release from lysosomes, eliciting a proton leak that balances V-ATPase activity to maintain pH homeostasis. Regulation of lumenal pH stability is required for autophagosome-lysosome fusion. Also acts as a potassium channel at higher pH, regulating potassium conductance in endosomes and lysosomes. Constitutes the pore-forming subunit of the lysoK(GF) complex, a complex activated by extracellular growth factors. The lysoK(GF) complex is composed of TMEM175 and AKT (AKT1, AKT2 or AKT3), a major target of growth factor receptors: in the complex, TMEM175 channel is opened by conformational changes by AKT, leading to its activation. The lysoK(GF) complex is required to protect neurons against stress-induced damage. The sequence is that of Endosomal/lysosomal proton channel TMEM175 from Rattus norvegicus (Rat).